Reading from the N-terminus, the 540-residue chain is GMP synthase [glutamine-hydrolyzing] (540 aa).

Positions 24–217 (KILIVDFGSQ…VRKVAGLTGD (194 aa)) constitute a Glutamine amidotransferase type-1 domain. Cys101 serves as the catalytic Nucleophile. Active-site residues include His191 and Glu193. The region spanning 218-415 (WTMRAFREEA…LGLPEIFVGR (198 aa)) is the GMPS ATP-PPase domain. An ATP-binding site is contributed by 245 to 251 (SGGVDSS).

Homodimer.

The enzyme catalyses XMP + L-glutamine + ATP + H2O = GMP + L-glutamate + AMP + diphosphate + 2 H(+). It functions in the pathway purine metabolism; GMP biosynthesis; GMP from XMP (L-Gln route): step 1/1. Catalyzes the synthesis of GMP from XMP. The sequence is that of GMP synthase [glutamine-hydrolyzing] from Nitrobacter hamburgensis (strain DSM 10229 / NCIMB 13809 / X14).